Reading from the N-terminus, the 220-residue chain is Charged multivesicular body protein 2a (220 aa).

Coiled-coil stretches lie at residues 12–53 (EEML…MAKQ) and 199–220 (PSAA…LRRD). The disordered stretch occupies residues 179–208 (LSNLPSTGGSLSVAGAKKGEPSAALADADA). The short motif at 208-218 (ADLEERLNNLR) is the MIT-interacting motif element.

It belongs to the SNF7 family. As to quaternary structure, probable core component of the endosomal sorting required for transport complex III (ESCRT-III). ESCRT-III components are thought to multimerize to form a flat lattice on the perimeter membrane of the endosome.

It localises to the late endosome membrane. Its subcellular location is the cytoplasm. In terms of biological role, probable core component of the endosomal sorting required for transport complex III (ESCRT-III) which is involved in multivesicular bodies (MVBs) formation and sorting of endosomal cargo proteins into MVBs. MVBs contain intraluminal vesicles (ILVs) that are generated by invagination and scission from the limiting membrane of the endosome and mostly are delivered to lysosomes enabling degradation of membrane proteins, such as stimulated growth factor receptors, lysosomal enzymes and lipids. This Xenopus tropicalis (Western clawed frog) protein is Charged multivesicular body protein 2a (chmp2a).